We begin with the raw amino-acid sequence, 159 residues long: Ribosomal RNA large subunit methyltransferase H (159 aa).

S-adenosyl-L-methionine contacts are provided by residues leucine 76, glycine 108, and 127–132; that span reads FGLLTL.

This sequence belongs to the RNA methyltransferase RlmH family. As to quaternary structure, homodimer.

It is found in the cytoplasm. The catalysed reaction is pseudouridine(1915) in 23S rRNA + S-adenosyl-L-methionine = N(3)-methylpseudouridine(1915) in 23S rRNA + S-adenosyl-L-homocysteine + H(+). In terms of biological role, specifically methylates the pseudouridine at position 1915 (m3Psi1915) in 23S rRNA. The sequence is that of Ribosomal RNA large subunit methyltransferase H from Streptococcus pyogenes serotype M5 (strain Manfredo).